The chain runs to 206 residues: Uracil phosphoribosyltransferase (206 aa).

Residues arginine 76, arginine 101, and aspartate 128–threonine 136 each bind 5-phospho-alpha-D-ribose 1-diphosphate. Residues isoleucine 191 and glycine 196–alanine 198 each bind uracil. Aspartate 197 serves as a coordination point for 5-phospho-alpha-D-ribose 1-diphosphate.

It belongs to the UPRTase family. The cofactor is Mg(2+).

The catalysed reaction is UMP + diphosphate = 5-phospho-alpha-D-ribose 1-diphosphate + uracil. It functions in the pathway pyrimidine metabolism; UMP biosynthesis via salvage pathway; UMP from uracil: step 1/1. Its activity is regulated as follows. Allosterically activated by GTP. Catalyzes the conversion of uracil and 5-phospho-alpha-D-ribose 1-diphosphate (PRPP) to UMP and diphosphate. This chain is Uracil phosphoribosyltransferase, found in Mycoplasma genitalium (strain ATCC 33530 / DSM 19775 / NCTC 10195 / G37) (Mycoplasmoides genitalium).